A 121-amino-acid chain; its full sequence is Large ribosomal subunit protein uL14 (121 aa).

The protein belongs to the universal ribosomal protein uL14 family. As to quaternary structure, part of the 50S ribosomal subunit. Forms a cluster with proteins L3 and L19. In the 70S ribosome, L14 and L19 interact and together make contacts with the 16S rRNA in bridges B5 and B8.

Binds to 23S rRNA. Forms part of two intersubunit bridges in the 70S ribosome. The polypeptide is Large ribosomal subunit protein uL14 (Opitutus terrae (strain DSM 11246 / JCM 15787 / PB90-1)).